A 307-amino-acid chain; its full sequence is Transcription initiation factor IIB 5 (307 aa).

The TFIIB-type zinc finger occupies 19–47 (TTEPCPECGGPVRTNSAETVCADCGLIID). Zn(2+) contacts are provided by Cys-23, Cys-26, Cys-39, and Cys-42. 2 stretches are compositionally biased toward basic and acidic residues: residues 54–66 (GPEW…DTAK) and 107–121 (MRRE…STKE). Residues 54–121 (GPEWHRDDAD…SRGRWRSTKE (68 aa)) are disordered. Repeat copies occupy residues 129–212 (TEIR…NEEL) and 223–304 (QFVP…RLLS).

This sequence belongs to the TFIIB family.

Its function is as follows. Stabilizes TBP binding to an archaeal box-A promoter. Also responsible for recruiting RNA polymerase II to the pre-initiation complex (DNA-TBP-TFIIB). The chain is Transcription initiation factor IIB 5 from Halobacterium salinarum (strain ATCC 700922 / JCM 11081 / NRC-1) (Halobacterium halobium).